Consider the following 322-residue polypeptide: tRNA dimethylallyltransferase (322 aa).

21-28 (GQTAVGKT) contacts ATP. Residue 23–28 (TAVGKT) participates in substrate binding. The tract at residues 46–49 (DSGC) is interaction with substrate tRNA.

It belongs to the IPP transferase family. As to quaternary structure, monomer. Requires Mg(2+) as cofactor.

The catalysed reaction is adenosine(37) in tRNA + dimethylallyl diphosphate = N(6)-dimethylallyladenosine(37) in tRNA + diphosphate. Functionally, catalyzes the transfer of a dimethylallyl group onto the adenine at position 37 in tRNAs that read codons beginning with uridine, leading to the formation of N6-(dimethylallyl)adenosine (i(6)A). The polypeptide is tRNA dimethylallyltransferase (Wigglesworthia glossinidia brevipalpis).